The primary structure comprises 166 residues: Ribonuclease P protein component (166 aa).

This sequence belongs to the RnpA family. In terms of assembly, consists of a catalytic RNA component (M1 or rnpB) and a protein subunit.

It catalyses the reaction Endonucleolytic cleavage of RNA, removing 5'-extranucleotides from tRNA precursor.. RNaseP catalyzes the removal of the 5'-leader sequence from pre-tRNA to produce the mature 5'-terminus. It can also cleave other RNA substrates such as 4.5S RNA. The protein component plays an auxiliary but essential role in vivo by binding to the 5'-leader sequence and broadening the substrate specificity of the ribozyme. This chain is Ribonuclease P protein component, found in Helicobacter pylori (strain HPAG1).